We begin with the raw amino-acid sequence, 142 residues long: Snaclec GPIB-binding protein subunit alpha (142 aa).

Disulfide bonds link Cys6–Cys17, Cys39–Cys136, and Cys111–Cys128. Positions 13–137 (HRQYCYKFFQ…CVEGNPFVCK (125 aa)) constitute a C-type lectin domain.

It belongs to the snaclec family. As to quaternary structure, heterodimer of subunits alpha and beta; disulfide-linked. As to expression, expressed by the venom gland.

The protein localises to the secreted. Binds to platelet GPIb (subunit alpha) (GP1BA) and functions as a receptor blocker for vWF binding to GPIb. The platelet GPIb-binding site resides on the GPIB-BP subunit beta and not on the alpha subunit. At a final concentration of 104 nM totally abolishes vWF-dependent shear-induced platelet aggregation (SIPA) at a high shear stress, but had no effect on SIPA at a low shear stress. In Bothrops jararaca (Jararaca), this protein is Snaclec GPIB-binding protein subunit alpha.